The primary structure comprises 665 residues: Envelope glycoprotein (665 aa).

Residues 1–33 (MARSTLSKPLKNKVNPRGPLIPLILLMLRGVST) form the signal peptide. A receptor-binding domain (RBD) region spans residues 34-267 (ASPGSSPHQV…RYQNLGPRVP (234 aa)). Topologically, residues 34-610 (ASPGSSPHQV…FNRSPWFTTL (577 aa)) are extracellular. N-linked (GlcNAc...) asparagine; by host glycosylation is present at Asn-45. Intrachain disulfides connect Cys-79–Cys-129, Cys-105–Cys-118, Cys-106–Cys-114, Cys-152–Cys-172, and Cys-164–Cys-177. Asp-117 lines the Zn(2+) pocket. An N-linked (GlcNAc...) asparagine; by host glycan is attached at Asn-199. Cys-209 and Cys-215 form a disulfide bridge. A disordered region spans residues 268–309 (IGPNPVLADQQPLSKPKPVKSPSVTKPPSGTPLSPTQLPPAG). Residues 281-299 (SKPKPVKSPSVTKPPSGTP) show a composition bias toward low complexity. An N-linked (GlcNAc...) asparagine; by host glycan is attached at Asn-326. Disulfide bonds link Cys-336–Cys-339, Cys-336–Cys-563, Cys-366–Cys-420, Cys-385–Cys-397, Cys-427–Cys-440, and Cys-555–Cys-562. Residues 336–339 (CWLC) carry the CXXC motif. 2 N-linked (GlcNAc...) asparagine; by host glycosylation sites follow: Asn-358 and Asn-365. Asn-398 and Asn-434 each carry an N-linked (GlcNAc...) asparagine; by host glycan. The interval 472-492 (VSLTLALLLGGLTMGGIAAGI) is fusion peptide. A coiled-coil region spans residues 500–537 (MATQQFQQLQAAVQDDLREVEKSISNLEKSLTSLSEVV). Residues 538-554 (LQNRRGLDLLFLKEGGL) form an immunosuppression region. The CX6CC motif lies at 555 to 563 (CAALKEECC). The helical transmembrane segment at 611-631 (ISTIMGPLIVLLMILLFGPCI) threads the bilayer. Residue Cys-630 is the site of S-palmitoyl cysteine; by host attachment. Over 632–665 (LNRLVQFVKDRISVVQALVLTQQYHQLKPIEYEP) the chain is Cytoplasmic. The YXXL motif; contains endocytosis signal signature appears at 655–658 (YHQL).

In terms of assembly, the mature envelope protein (Env) consists of a trimer of SU-TM heterodimers attached by a labile interchain disulfide bond. The activated Env consists of SU monomers and TM trimers. Post-translationally, specific enzymatic cleavages in vivo yield mature proteins. Envelope glycoproteins are synthesized as an inactive precursor that is N-glycosylated and processed likely by host cell furin or by a furin-like protease in the Golgi to yield the mature SU and TM proteins. The cleavage site between SU and TM requires the minimal sequence [KR]-X-[KR]-R. The R-peptide is released from the C-terminus of the cytoplasmic tail of the TM protein upon particle formation as a result of proteolytic cleavage by the viral protease. Cleavage of this peptide is required for TM to become fusogenic. In terms of processing, the CXXC motif is highly conserved across a broad range of retroviral envelope proteins. It is thought to participate in the formation of a labile disulfide bond possibly with the CX6CC motif present in the transmembrane protein. Isomerization of the intersubunit disulfide bond to an SU intrachain disulfide bond is thought to occur upon receptor recognition in order to allow membrane fusion. The transmembrane protein is palmitoylated. Post-translationally, the R-peptide is palmitoylated.

Its subcellular location is the virion membrane. It localises to the host cell membrane. Functionally, the surface protein (SU) attaches the virus to the host cell by binding to its receptor. Interaction with HECT ubiquitin ligases activates a thiol in a CXXC motif of the C-terminal domain, where the other Cys residue participates in the formation of the intersubunit disulfide. The activated thiol will attack the disulfide and cause its isomerization into a disulfide isomer within the motif. This leads to SU displacement and TM refolding, and is thought to activate its fusogenic potential by unmasking its fusion peptide. Fusion occurs at the host cell plasma membrane. In terms of biological role, the transmembrane protein (TM) acts as a class I viral fusion protein. Under the current model, the protein has at least 3 conformational states: pre-fusion native state, pre-hairpin intermediate state, and post-fusion hairpin state. During viral and target cell membrane fusion, the coiled coil regions (heptad repeats) assume a trimer-of-hairpins structure, positioning the fusion peptide in close proximity to the C-terminal region of the ectodomain. The formation of this structure appears to drive apposition and subsequent fusion of viral and target cell membranes. Membranes fusion leads to delivery of the nucleocapsid into the cytoplasm. The polypeptide is Envelope glycoprotein (env) (Mus musculus (Mouse)).